A 201-amino-acid polypeptide reads, in one-letter code: 3-isopropylmalate dehydratase small subunit (201 aa).

It belongs to the LeuD family. LeuD type 1 subfamily. Heterodimer of LeuC and LeuD.

The enzyme catalyses (2R,3S)-3-isopropylmalate = (2S)-2-isopropylmalate. It functions in the pathway amino-acid biosynthesis; L-leucine biosynthesis; L-leucine from 3-methyl-2-oxobutanoate: step 2/4. Catalyzes the isomerization between 2-isopropylmalate and 3-isopropylmalate, via the formation of 2-isopropylmaleate. The protein is 3-isopropylmalate dehydratase small subunit of Shewanella putrefaciens (strain CN-32 / ATCC BAA-453).